The primary structure comprises 173 residues: Photosystem I assembly protein Ycf3 (173 aa).

3 TPR repeats span residues 35–68, 72–105, and 120–153; these read AYVY…ETDP, GETL…NPKQ, and GRIA…NPGG.

Belongs to the Ycf3 family.

It localises to the cellular thylakoid membrane. Essential for the assembly of the photosystem I (PSI) complex. May act as a chaperone-like factor to guide the assembly of the PSI subunits. The protein is Photosystem I assembly protein Ycf3 of Synechococcus sp. (strain CC9902).